A 451-amino-acid polypeptide reads, in one-letter code: Tubulin alpha chain (451 aa).

Gln-11 is a binding site for GTP. Lys-40 carries the post-translational modification N6-acetyllysine. Glu-71, Gly-144, Thr-145, Thr-179, Asn-206, and Asn-228 together coordinate GTP. Glu-71 lines the Mg(2+) pocket. Glu-254 is a catalytic residue.

It belongs to the tubulin family. In terms of assembly, dimer of alpha and beta chains. A typical microtubule is a hollow water-filled tube with an outer diameter of 25 nm and an inner diameter of 15 nM. Alpha-beta heterodimers associate head-to-tail to form protofilaments running lengthwise along the microtubule wall with the beta-tubulin subunit facing the microtubule plus end conferring a structural polarity. Microtubules usually have 13 protofilaments but different protofilament numbers can be found in some organisms and specialized cells. Requires Mg(2+) as cofactor. Post-translationally, undergoes a tyrosination/detyrosination cycle, the cyclic removal and re-addition of a C-terminal tyrosine residue by the enzymes tubulin tyrosine carboxypeptidase (TTCP) and tubulin tyrosine ligase (TTL), respectively. In terms of processing, acetylation of alpha chains at Lys-40 stabilizes microtubules and affects affinity and processivity of microtubule motors. This modification has a role in multiple cellular functions, ranging from cell motility, cell cycle progression or cell differentiation to intracellular trafficking and signaling.

Its subcellular location is the cytoplasm. The protein resides in the cytoskeleton. It carries out the reaction GTP + H2O = GDP + phosphate + H(+). Functionally, tubulin is the major constituent of microtubules, a cylinder consisting of laterally associated linear protofilaments composed of alpha- and beta-tubulin heterodimers. Microtubules grow by the addition of GTP-tubulin dimers to the microtubule end, where a stabilizing cap forms. Below the cap, tubulin dimers are in GDP-bound state, owing to GTPase activity of alpha-tubulin. In Euglena gracilis, this protein is Tubulin alpha chain (TUBA).